Reading from the N-terminus, the 180-residue chain is Signal peptidase complex subunit 3 (180 aa).

Residues M1 to L11 are Cytoplasmic-facing. A helical; Signal-anchor for type II membrane protein membrane pass occupies residues F12–F32. Residues K33 to Y180 are Lumenal-facing. N-linked (GlcNAc...) asparagine glycosylation occurs at N141.

It belongs to the SPCS3 family. Component of the signal peptidase complex paralog A (SPC-A) composed of a catalytic subunit SEC11A and three accessory subunits SPCS1, SPCS2 and SPCS3. Component of the signal peptidase complex paralog C (SPC-C) composed of a catalytic subunit SEC11C and three accessory subunits SPCS1, SPCS2 and SPCS3. The complex induces a local thinning of the ER membrane which is used to measure the length of the signal peptide (SP) h-region of protein substrates. This ensures the selectivity of the complex towards h-regions shorter than 18-20 amino acids. As to expression, expressed in hen oviduct (at protein level).

The protein localises to the endoplasmic reticulum membrane. Functionally, essential component of the signal peptidase complex (SPC) which catalyzes the cleavage of N-terminal signal sequences from nascent proteins as they are translocated into the lumen of the endoplasmic reticulum. Essential for the SPC catalytic activity, possibly by stabilizing and positioning the active center of the complex close to the lumenal surface. This chain is Signal peptidase complex subunit 3, found in Gallus gallus (Chicken).